The following is a 351-amino-acid chain: Ribosomal RNA small subunit methyltransferase H (351 aa).

S-adenosyl-L-methionine contacts are provided by residues 48-50, Asp-67, Phe-94, Asp-115, and Gln-122; that span reads GGY. Positions 274–351 are disordered; it reads AAQASRHVPG…PAPQGRGPRR (78 aa).

The protein belongs to the methyltransferase superfamily. RsmH family.

It localises to the cytoplasm. The catalysed reaction is cytidine(1402) in 16S rRNA + S-adenosyl-L-methionine = N(4)-methylcytidine(1402) in 16S rRNA + S-adenosyl-L-homocysteine + H(+). Functionally, specifically methylates the N4 position of cytidine in position 1402 (C1402) of 16S rRNA. The sequence is that of Ribosomal RNA small subunit methyltransferase H from Methylorubrum extorquens (strain ATCC 14718 / DSM 1338 / JCM 2805 / NCIMB 9133 / AM1) (Methylobacterium extorquens).